A 1052-amino-acid polypeptide reads, in one-letter code: SWI/SNF-related matrix-associated actin-dependent regulator of chromatin subfamily A member 5 (1052 aa).

Positions 1–15 are enriched in pro residues; that stretch reads MSSAAEPPPPPPPES. Positions 1–83 are disordered; it reads MSSAAEPPPP…QEPDPTYEEK (83 aa). Ser-2 carries the post-translational modification N-acetylserine. The segment covering 16–55 has biased composition (low complexity); the sequence is APSKPAASIASGGSNSSNKGGPEGVAAQAVASAASAGPAD. A Phosphoserine modification is found at Ser-66. Residues 69–83 are compositionally biased toward basic and acidic residues; it reads KQKEIQEPDPTYEEK. Lys-83 participates in a covalent cross-link: Glycyl lysine isopeptide (Lys-Gly) (interchain with G-Cter in SUMO2). Residue Thr-113 is modified to Phosphothreonine. Phosphoserine occurs at positions 116, 137, and 171. The Helicase ATP-binding domain occupies 192-357; the sequence is ISLYENGING…WSLLNFLLPD (166 aa). An ATP-binding site is contributed by 205–212; the sequence is DEMGLGKT. The DEAH box motif lies at 308 to 311; sequence DEAH. Residue Lys-440 is modified to N6-acetyllysine. The 152-residue stretch at 487-638 folds into the Helicase C-terminal domain; that stretch reads VLDKLLPKLK…SIVIQQGRLV (152 aa). Residues Lys-644, Lys-647, Lys-694, Lys-722, and Lys-735 each participate in a glycyl lysine isopeptide (Lys-Gly) (interchain with G-Cter in SUMO2) cross-link. Ser-755 and Ser-825 each carry phosphoserine. 2 SANT domains span residues 840-892 and 943-1007; these read QGFT…ERCN and KGKN…LITL. Lys-966 is covalently cross-linked (Glycyl lysine isopeptide (Lys-Gly) (interchain with G-Cter in SUMO2)). The tract at residues 1015–1052 is disordered; the sequence is LEEKEKAEKKKRGPKPSTQKRKMDGAPDGRGRKKKLKL. The span at 1023 to 1034 shows a compositional bias: basic residues; sequence KKKRGPKPSTQK. Basic and acidic residues predominate over residues 1035 to 1044; that stretch reads RKMDGAPDGR.

This sequence belongs to the SNF2/RAD54 helicase family. ISWI subfamily. As to quaternary structure, component of the ACF-5 ISWI chromatin-remodeling complex (also called the ACF/WCRF complex) at least composed of SMARCA5/SNF2H and BAZ1A/ACF1, which regulates the spacing of histone octamers on the DNA template to facilitate access to DNA. Within the complex interacts with BAZ1A/ACF1; the interaction is direct and is required to slide nucleosomes from end to center positions on a DNA template in an ATP-dependent manner. Component of the CHRAC ISWI chromatin-remodeling complex at least composed of SMARCA5/SNF2H, BAZ1A/ACF1, CHRAC1 and POLE3; the complex preferentially binds DNA through the CHRAC1-POLE3 heterodimer and possesses ATP-dependent nucleosome-remodeling activity. Within the complex interacts with BAZ1A/ACF1; the interaction is direct and promotes the interaction with the POLE3-CHRAC1 heterodimer. Within the complex interacts with the POLE3-CHRAC1 heterodimer; the interaction is direct and enhances nucleosome sliding activity by the SMARCA5/SNF2H and BAZ1A/ACF1 interaction. Neither POLE3 nor CHRAC1 enhances nucleosome sliding activity of the ACF-5 ISWI chromatin remodeling complex. Component of the WICH-5 ISWI chromatin-remodeling complex (also called the WICH complex) at least composed of SMARCA5/SNF2H and BAZ1B/WSTF, which regulates the spacing of histone octamers on the DNA template to facilitate access to DNA. Within the complex interacts with BAZ1B/WSTF. Component of the NoRC-5 ISWI chromatin-remodeling complex (also called the NoRC chromatin-remodeling complex) at least composed of SMARCA5/SNF2H and BAZ2A/TIP5; the complex suppresses rDNA transcription by a combination of nucleosome remodeling, histone deacetylation, and DNA methylation. Within the complex interacts with BAZ2A/TIP5. Within the complex interacts with HDAC1. Component of the BRF-5 ISWI chromatin-remodeling complex at least composed of SMARCA5/SNF2H and BAZ2B. Within the complex interacts with BAZ2B. Component of the NURF-5 ISWI chromatin-remodeling complex at least composed of SMARCA5/SNF2H and BPTF. Within the complex interacts with BPFT. Component of the CERF-5 ISWI chromatin-remodeling complex at least composed of SMARCA5/SNF2H and CECR2. LUZP1 is detected as part of the CERF-5 complex in embryonic stem cells where it is involved in complex stabilization but is not detected in the complex in the testis. Within the complex interacts with CECR2. Component of the RSF-5 ISWI chromatin-remodeling complex (also called the RSF complex) at least composed of SMARCA5/SNF2H and RSF1. Within the complex interacts with RSF1. Interacts with the cohesin complex component RAD21; the interaction is direct. Interacts with the NuRD complex components HDAC2, RBBP4 and CHD4; the interactions are direct. Interacts with PCNA. Component of the B-WICH complex, at least composed of SMARCA5/SNF2H, BAZ1B/WSTF, SF3B1, DEK, MYO1C, ERCC6, MYBBP1A and DDX21 which positively regulates RNA polymerase III transcription. Interacts with MYO1C. Interacts with BEND3. Interacts with SIRT6; promoting recruitment to DNA damage sites. In terms of assembly, (Microbial infection) Interacts with JC virus small t antigen. (Microbial infection) Interacts with Epstein Barr virus (EBV) lytic switch protein BZLF1; this interaction participates to the activation of early lytic viral genes by BZLF1. As to expression, ubiquitously expressed.

Its subcellular location is the nucleus. It localises to the chromosome. The catalysed reaction is ATP + H2O = ADP + phosphate + H(+). ATPase that possesses intrinsic ATP-dependent nucleosome-remodeling activity. Catalytic subunit of ISWI chromatin-remodeling complexes, which form ordered nucleosome arrays on chromatin and facilitate access to DNA during DNA-templated processes such as DNA replication, transcription, and repair; this may require intact histone H4 tails. Within the ISWI chromatin-remodeling complexes, slides edge- and center-positioned histone octamers away from their original location on the DNA template. Catalytic activity and histone octamer sliding propensity is regulated and determined by components of the ISWI chromatin-remodeling complexes. The BAZ1A/ACF1-, BAZ1B/WSTF-, BAZ2A/TIP5- and BAZ2B-containing ISWI chromatin-remodeling complexes regulate the spacing of nucleosomes along the chromatin and have the ability to slide mononucleosomes to the center of a DNA template in an ATP-dependent manner. The CECR2- and RSF1-containing ISWI chromatin-remodeling complexes do not have the ability to slide mononucleosomes to the center of a DNA template. Binds to core histones together with RSF1, and is required for the assembly of regular nucleosome arrays by the RSF-5 ISWI chromatin-remodeling complex. Involved in DNA replication and together with BAZ1A/ACF1 is required for replication of pericentric heterochromatin in S-phase. Probably plays a role in repression of RNA polymerase I dependent transcription of the rDNA locus, through the recruitment of the SIN3/HDAC1 corepressor complex to the rDNA promoter. Essential component of the WICH-5 ISWI chromatin-remodeling complex (also called the WICH complex), a chromatin-remodeling complex that mobilizes nucleosomes and reconfigures irregular chromatin to a regular nucleosomal array structure. The WICH-5 ISWI chromatin-remodeling complex regulates the transcription of various genes, has a role in RNA polymerase I transcription. Within the B-WICH complex has a role in RNA polymerase III transcription. Mediates the histone H2AX phosphorylation at 'Tyr-142', and is involved in the maintenance of chromatin structures during DNA replication processes. Essential component of NoRC-5 ISWI chromatin-remodeling complex, a complex that mediates silencing of a fraction of rDNA by recruiting histone-modifying enzymes and DNA methyltransferases, leading to heterochromatin formation and transcriptional silencing. This chain is SWI/SNF-related matrix-associated actin-dependent regulator of chromatin subfamily A member 5, found in Homo sapiens (Human).